The sequence spans 402 residues: Formate-dependent phosphoribosylglycinamide formyltransferase (402 aa).

N(1)-(5-phospho-beta-D-ribosyl)glycinamide is bound by residues 23-24 (EL) and E83. ATP contacts are provided by residues R115, K156, 196-199 (EEFV), and E204. The region spanning 120 to 316 (RLAAEKVGVP…EFAIHARAVL (197 aa)) is the ATP-grasp domain. The Mg(2+) site is built by E274 and E287. Residues D294, K364, and 371 to 372 (RR) contribute to the N(1)-(5-phospho-beta-D-ribosyl)glycinamide site.

This sequence belongs to the PurK/PurT family. Homodimer.

It carries out the reaction N(1)-(5-phospho-beta-D-ribosyl)glycinamide + formate + ATP = N(2)-formyl-N(1)-(5-phospho-beta-D-ribosyl)glycinamide + ADP + phosphate + H(+). Its pathway is purine metabolism; IMP biosynthesis via de novo pathway; N(2)-formyl-N(1)-(5-phospho-D-ribosyl)glycinamide from N(1)-(5-phospho-D-ribosyl)glycinamide (formate route): step 1/1. In terms of biological role, involved in the de novo purine biosynthesis. Catalyzes the transfer of formate to 5-phospho-ribosyl-glycinamide (GAR), producing 5-phospho-ribosyl-N-formylglycinamide (FGAR). Formate is provided by PurU via hydrolysis of 10-formyl-tetrahydrofolate. In Ignicoccus hospitalis (strain KIN4/I / DSM 18386 / JCM 14125), this protein is Formate-dependent phosphoribosylglycinamide formyltransferase.